A 202-amino-acid chain; its full sequence is Glycerol-3-phosphate acyltransferase (202 aa).

4 helical membrane passes run 11–31 (ALIA…GLIL), 87–107 (PALA…WLGF), 116–136 (FIGV…AIWL), and 158–178 (VILW…LAAL).

This sequence belongs to the PlsY family. Probably interacts with PlsX.

It is found in the cell inner membrane. It carries out the reaction an acyl phosphate + sn-glycerol 3-phosphate = a 1-acyl-sn-glycero-3-phosphate + phosphate. It functions in the pathway lipid metabolism; phospholipid metabolism. Its function is as follows. Catalyzes the transfer of an acyl group from acyl-phosphate (acyl-PO(4)) to glycerol-3-phosphate (G3P) to form lysophosphatidic acid (LPA). This enzyme utilizes acyl-phosphate as fatty acyl donor, but not acyl-CoA or acyl-ACP. In Methylorubrum populi (strain ATCC BAA-705 / NCIMB 13946 / BJ001) (Methylobacterium populi), this protein is Glycerol-3-phosphate acyltransferase.